Here is a 295-residue protein sequence, read N- to C-terminus: CRISPR system Cmr endoribonuclease Cmr4 (295 aa).

The protein belongs to the CRISPR system Cmr4 family. In terms of assembly, forms oligomers in isolation. Part of the type III-B Cmr ribonucleoprotein (RNP) complex, an elongated RNP with Cmr2 and Cmr3 as the base, with Cmr4 and Cmr5 forming a helical core along the mature crRNA (39 or 45 nt in length), while the complex is capped by Cmr6 and Cmr1. The 5' end of the crRNA is bound to Cmr2 and Cmr3, while Cmr6 and a Cmr1 subunit (Cmr1-1 or Cmr1-2) cap the 3' end of the crRNA. The target RNA lies anti-parallel to the crRNA, with its 5' end near Cmr1 and Cmr6 and its 3' end near Cmr2 and Cmr3; major target RNA cleavage occurs nears the junction of Cmr1/Cmr6 and Cmr4/Cmr5, with minor cleavage occurring at 6 nt intervals which coincide with the proposed spacing of Cmr4 subunits. Interacts with Cmr5. Interacts with Cmr2, Cmr3, Cmr5 and Cmr6.

It localises to the cytoplasm. In terms of biological role, CRISPR (clustered regularly interspaced short palindromic repeat), is an adaptive immune system that provides protection against mobile genetic elements (viruses, transposable elements and conjugative plasmids). CRISPR clusters contain sequences complementary to antecedent mobile elements and target invading nucleic acids. CRISPR clusters are transcribed and processed into CRISPR RNA (crRNA), formerly called psiRNA (prokaryotic silencing) in this organism. Part of the Cmr ribonucleoprotein complex which has divalent cation-dependent endoribonuclease activity specific for ssRNA complementary to the crRNA (target RNA), generating 5' hydroxy- and 3' phosphate or 2'-3' cyclic phosphate termini. This is probably the subunit that cleaves the target RNA. Cmr complex does not cleave ssDNA complementary to the crRNA. Cleavage of target RNA is guided by the crRNA; substrate cleavage occurs a fixed distance (14 nt) from the 3' end of the crRNA. In vitro reconstitution shows Cmr1-2 and Cmr5 are not absolutely necessary for target cleavage. The polypeptide is CRISPR system Cmr endoribonuclease Cmr4 (Pyrococcus furiosus (strain ATCC 43587 / DSM 3638 / JCM 8422 / Vc1)).